The following is a 409-amino-acid chain: Peptidase T (409 aa).

A Zn(2+)-binding site is contributed by histidine 79. Aspartate 81 is a catalytic residue. Aspartate 140 provides a ligand contact to Zn(2+). The active-site Proton acceptor is glutamate 174. Zn(2+) is bound by residues glutamate 175, aspartate 197, and histidine 379.

The protein belongs to the peptidase M20B family. Zn(2+) serves as cofactor.

The protein localises to the cytoplasm. It carries out the reaction Release of the N-terminal residue from a tripeptide.. In terms of biological role, cleaves the N-terminal amino acid of tripeptides. The polypeptide is Peptidase T (Lysinibacillus sphaericus (strain C3-41)).